The sequence spans 140 residues: Lipoprotein MlpG (140 aa).

The first 17 residues, 1–17, serve as a signal peptide directing secretion; the sequence is MKIINILFCLFLLMLNG. Cys18 is lipidated: N-palmitoyl cysteine. The S-diacylglycerol cysteine moiety is linked to residue Cys18. Residues 22–57 form a disordered region; the sequence is DTNTKQTKSRQKRDLTQKEATQEKPKSKSKEDLLRE. Residues 33–57 are compositionally biased toward basic and acidic residues; sequence KRDLTQKEATQEKPKSKSKEDLLRE.

This sequence belongs to the Multicopy lipoprotein (Mlp) family.

Its subcellular location is the cell outer membrane. In terms of biological role, an outer membrane protein that may participate in pathogenesis. Some human Lyme disease patients have antibodies against this protein. The Mlp proteins probably undergo intragenic recombination, generating new alleles. The protein is Lipoprotein MlpG of Borreliella burgdorferi (strain ATCC 35210 / DSM 4680 / CIP 102532 / B31) (Borrelia burgdorferi).